A 487-amino-acid chain; its full sequence is WAS/WASL-interacting protein family member 1 (487 aa).

The segment covering 1–14 (MPVPPPPAPPPPPT) has biased composition (pro residues). A disordered region spans residues 1–487 (MPVPPPPAPP…GAPPLPPIPR (487 aa)). A compositionally biased stretch (polar residues) spans 21–31 (EKPSLNKTEQA). The WH2 domain occupies 32–49 (GRNALLSDISKGKKLKKT). Arginine 33 carries the asymmetric dimethylarginine modification. A binds actin region spans residues 45–48 (KLKK). The span at 64-100 (GAGGGYGGGSGGGGGGGSSGGGGNFGGGGPPGLGGLF) shows a compositional bias: gly residues. 2 positions are modified to omega-N-methylarginine: arginine 121 and arginine 130. Residues 136–147 (PFSSPSGPGRFP) are compositionally biased toward low complexity. Serine 138 bears the Phosphoserine mark. Composition is skewed to pro residues over residues 157 to 170 (PPEPPRNRMPPPRP) and 178 to 190 (SLPPPVPNTPRPI). Phosphoserine is present on serine 222. Composition is skewed to pro residues over residues 234-243 (FPRPPLPPTP), 269-285 (VPPPPSQNSKPPVPSTP), and 293-309 (APPPPPPSRPGPPPLPP). Serine 324 is modified (phosphoserine). The span at 328–355 (PTPPLPSPGRSGPLPPPPTERPPPPVRD) shows a compositional bias: pro residues. Threonine 329 carries the post-translational modification Phosphothreonine. The residue at position 334 (serine 334) is a Phosphoserine. 3 XRSGPXPPXP motif repeats span residues 336–345 (GRSGPLPPPP), 358–367 (GRSGPLPPPP), and 394–403 (PRSGPRPPLP). Residues 397 to 418 (GPRPPLPPDRPGAGAPPPPPPS) show a composition bias toward pro residues. Polar residues predominate over residues 419-428 (TSVRNGFQDS). Residues 464–478 (ARSESRSGSNRRERG) show a composition bias toward basic and acidic residues.

Belongs to the verprolin family. As to quaternary structure, binds to WAS within the N-terminal region, at a site distinct from the CDC42-binding site. Binds profilin and actin. Interacts with DBNL. Binds to WASL. Interacts with DBNL. Interacts with FNBP1L (via the SH3 domain). In terms of tissue distribution, isoforms were differentially expressed. One isoform was ubiquitously expressed, another was muscle-specific and another was expressed in the liver, heart and testis.

The protein localises to the cytoplasmic vesicle. The protein resides in the cytoplasm. It localises to the cytoskeleton. Its subcellular location is the cell projection. It is found in the ruffle. Its function is as follows. Plays a role in the reorganization of the actin cytoskeleton. Contributes with NCK1 and GRB2 in the recruitment and activation of WASL. Plays a role in the formation of cell ruffles. May participate in regulating the subcellular localization of WASL, resulting in the disassembly of stress fibers in favor of filopodia formation. In Rattus norvegicus (Rat), this protein is WAS/WASL-interacting protein family member 1 (Wipf1).